The sequence spans 598 residues: Elongation factor 4 (598 aa).

The tr-type G domain maps to 5–187 (ANIRNFSIIA…ALVEFIPAPT (183 aa)). GTP contacts are provided by residues 17-22 (DHGKST) and 134-137 (NKID).

The protein belongs to the TRAFAC class translation factor GTPase superfamily. Classic translation factor GTPase family. LepA subfamily.

The protein localises to the cell inner membrane. It carries out the reaction GTP + H2O = GDP + phosphate + H(+). Functionally, required for accurate and efficient protein synthesis under certain stress conditions. May act as a fidelity factor of the translation reaction, by catalyzing a one-codon backward translocation of tRNAs on improperly translocated ribosomes. Back-translocation proceeds from a post-translocation (POST) complex to a pre-translocation (PRE) complex, thus giving elongation factor G a second chance to translocate the tRNAs correctly. Binds to ribosomes in a GTP-dependent manner. The protein is Elongation factor 4 of Psychrobacter cryohalolentis (strain ATCC BAA-1226 / DSM 17306 / VKM B-2378 / K5).